The sequence spans 484 residues: BPI fold-containing family B member 1 (484 aa).

An N-terminal signal peptide occupies residues Met-1–Ala-21. A glycan (N-linked (GlcNAc...) asparagine) is linked at Asn-48. Cysteines 158 and 201 form a disulfide. 2 N-linked (GlcNAc...) asparagine glycosylation sites follow: Asn-264 and Asn-401.

This sequence belongs to the BPI/LBP/Plunc superfamily. Plunc family. As to expression, detected in duodenum mucosal crypts of cholera patients, near Paneth cells (at protein level). Detected in trachea, nasal septal epithelium and lung.

Its subcellular location is the secreted. Functionally, may play a role in innate immunity in mouth, nose and lungs. Binds bacterial lipopolysaccharide (LPS) and modulates the cellular responses to LPS. The polypeptide is BPI fold-containing family B member 1 (BPIFB1) (Homo sapiens (Human)).